The primary structure comprises 96 residues: Co-chaperonin GroES (96 aa).

The protein belongs to the GroES chaperonin family. Heptamer of 7 subunits arranged in a ring. Interacts with the chaperonin GroEL.

Its subcellular location is the cytoplasm. In terms of biological role, together with the chaperonin GroEL, plays an essential role in assisting protein folding. The GroEL-GroES system forms a nano-cage that allows encapsulation of the non-native substrate proteins and provides a physical environment optimized to promote and accelerate protein folding. GroES binds to the apical surface of the GroEL ring, thereby capping the opening of the GroEL channel. This chain is Co-chaperonin GroES, found in Buchnera aphidicola subsp. Acyrthosiphon pisum (strain 5A).